Consider the following 391-residue polypeptide: DNA repair protein NreA (391 aa).

The segment at Cys6–Cys20 adopts a C4-type zinc-finger fold. The PIP motif motif lies at Gln382 to Phe389.

This sequence belongs to the Nre family. As to quaternary structure, interacts with the DNA polymerase sliding clamp (PCNA) via the PIP (PCNA-interacting peptide) motif.

In terms of biological role, involved in DNA damage repair. This chain is DNA repair protein NreA, found in Archaeoglobus fulgidus (strain ATCC 49558 / DSM 4304 / JCM 9628 / NBRC 100126 / VC-16).